The sequence spans 414 residues: F-box protein At3g26010 (414 aa).

Positions 5–52 constitute an F-box domain; the sequence is NRTIHLTDAIWTEILARLPLRIIARFKSVSKTWKSTIESVYFRRLFVS.

The protein is F-box protein At3g26010 of Arabidopsis thaliana (Mouse-ear cress).